We begin with the raw amino-acid sequence, 480 residues long: MLHRNRFLVLLALAGLLAFLSLSLQFFHLIPVSATKNGGSSKSRKRIMPDPVTEPPTVDPVYEALLYCNIPSVAEHSMEGHAPHHYKLVSVHVFIRHGDRYPLYAIPKTKRPEIDCTLVASRKPYHPKLEAFISHMLKGSGASFESPLNSLPLYPNHPLCETGELTQTGVVQHLLNGQLLRDIYLRKHKLLPNNWSSDQLYLESTGKSRTLQSGLALLYGFLPEFDWKKVYFKHQPSALFCSGSCYCPLRNQYLEKEQRRQYLLRLKNSDLERTYGEMAKIVDIPTKQLRAANPIDSMLCHFCHNVSFPCSRSGCLGMEHFKVIKTHQIEDERERHEKLLYFGYSLLGAHPILNQTVNRMQRAASGWRDELFTLYSAHDVTLSPILSALGLLEARFPRFAARLVFELWQDRQKPSEHSVRILYNGADVTFHTSFCHDFHKRSPKPMCPLENLVRFVKRDMFVALDGSSTNYYDACHGEGA.

Residues 1 to 6 are Cytoplasmic-facing; sequence MLHRNR. The helical; Signal-anchor for type II membrane protein transmembrane segment at 7 to 27 threads the bilayer; that stretch reads FLVLLALAGLLAFLSLSLQFF. Over 28–480 the chain is Lumenal; the sequence is HLIPVSATKN…YYDACHGEGA (453 aa). Catalysis depends on His-97, which acts as the Nucleophile. 3 N-linked (GlcNAc...) asparagine glycosylation sites follow: Asn-194, Asn-305, and Asn-354. The Proton donor role is filled by Asp-379.

The protein belongs to the histidine acid phosphatase family. As to quaternary structure, interacts with B3GAT3; the interaction increases the 2-phosphoxylose phosphatase activity of PXYLP1 during completion of linkage region formation in a B3GAT3-mediated manner.

It is found in the golgi apparatus membrane. It catalyses the reaction 3-O-[beta-D-GlcA-(1-&gt;3)-beta-D-Gal-(1-&gt;3)-beta-D-Gal-(1-&gt;4)-beta-D-2-O-P-Xyl]-L-seryl-[protein] + H2O = 3-O-(beta-D-GlcA-(1-&gt;3)-beta-D-Gal-(1-&gt;3)-beta-D-Gal-(1-&gt;4)-beta-D-Xyl)-L-seryl-[protein] + phosphate. Functionally, responsible for the 2-O-dephosphorylation of xylose in the glycosaminoglycan-protein linkage region of proteoglycans thereby regulating the amount of mature glycosaminoglycan (GAG) chains. Sulfated glycosaminoglycans (GAGs), including heparan sulfate and chondroitin sulfate, are synthesized on the so-called common GAG-protein linkage region (GlcUAbeta1-3Galbeta1-3Galbeta1-4Xylbeta1-O-Ser) of core proteins, which is formed by the stepwise addition of monosaccharide residues by the respective specific glycosyltransferases. Xylose 2-O-dephosphorylation during completion of linkage region formation is a prerequisite for the initiation and efficient elongation of the repeating disaccharide region of GAG chains. This chain is 2-phosphoxylose phosphatase 1, found in Mus musculus (Mouse).